Here is a 257-residue protein sequence, read N- to C-terminus: MAHSQVGIQLISESTEKTLAELTALCAEHNIIHHEKSPLALVQTDERLELRKLDEPKLGAVYVDFVGGTMAHRRKFGGGRGEAVAKAVGIKGSELPTVIDATAGLGRDAFVLASIGCQVRLVERHPVVFLLLQDGLNRAYQDEEIGEMLQQNLCLLNVHHINELDPNSDYADVVYLDPMYPHKQKSALVKKEMRVFQHLVGADLDADELLLPALQLAKKRVVVKRPDYAEFLCGKQPHFSRETKNHRFDIYMGASQC.

S-adenosyl-L-methionine is bound by residues 107–108 (RD), 123–124 (ER), and D177.

Belongs to the methyltransferase superfamily. RsmJ family.

It localises to the cytoplasm. It carries out the reaction guanosine(1516) in 16S rRNA + S-adenosyl-L-methionine = N(2)-methylguanosine(1516) in 16S rRNA + S-adenosyl-L-homocysteine + H(+). Functionally, specifically methylates the guanosine in position 1516 of 16S rRNA. This is Ribosomal RNA small subunit methyltransferase J from Haemophilus influenzae (strain PittEE).